The chain runs to 165 residues: Endoribonuclease YbeY (165 aa).

Positions 130, 134, and 140 each coordinate Zn(2+).

The protein belongs to the endoribonuclease YbeY family. It depends on Zn(2+) as a cofactor.

The protein resides in the cytoplasm. Single strand-specific metallo-endoribonuclease involved in late-stage 70S ribosome quality control and in maturation of the 3' terminus of the 16S rRNA. This is Endoribonuclease YbeY from Streptococcus thermophilus (strain CNRZ 1066).